A 197-amino-acid polypeptide reads, in one-letter code: Guanylyl cyclase-activating protein 2 (197 aa).

G2 carries N-myristoyl glycine lipidation. EF-hand domains follow at residues 15–50 (DVAE…QDNQ), 51–86 (EAAD…VLRG), 87–122 (KLEH…IYNL), and 138–173 (SPEQ…DKWV). Ca(2+)-binding residues include D64, N66, D68, T70, E75, D100, D102, N104, C106, E111, D151, N153, D155, Q157, and E162.

Low expression in retina.

Its function is as follows. Stimulates guanylyl cyclase 1 (GC1) and GC2 when free calcium ions concentration is low and inhibits guanylyl cyclases when free calcium ions concentration is elevated. This Ca(2+)-sensitive regulation of guanylyl cyclase (GC) is a key event in recovery of the dark state of rod photoreceptors following light exposure. This is Guanylyl cyclase-activating protein 2 (GUCA1B) from Lithobates pipiens (Northern leopard frog).